A 441-amino-acid chain; its full sequence is Glutamate-1-semialdehyde 2,1-aminomutase (441 aa).

Position 276 is an N6-(pyridoxal phosphate)lysine (Lys-276).

It belongs to the class-III pyridoxal-phosphate-dependent aminotransferase family. HemL subfamily. In terms of assembly, homodimer. It depends on pyridoxal 5'-phosphate as a cofactor.

It is found in the cytoplasm. The catalysed reaction is (S)-4-amino-5-oxopentanoate = 5-aminolevulinate. The protein operates within porphyrin-containing compound metabolism; protoporphyrin-IX biosynthesis; 5-aminolevulinate from L-glutamyl-tRNA(Glu): step 2/2. The chain is Glutamate-1-semialdehyde 2,1-aminomutase from Rhodococcus jostii (strain RHA1).